The following is a 122-amino-acid chain: MIQFMTKLNVADNTGAKQVGVIKVLGGTKRRYASVGDIVVVSVKKAQPDGIVRKGQVCKAVIVRVKKNITRSSGNSLSFDDNACVIIKEDKTPRGSRIFGPVARELRDKGFSKIVSLAPEVL.

This sequence belongs to the universal ribosomal protein uL14 family. Part of the 50S ribosomal subunit. Forms a cluster with proteins L3 and L19. In the 70S ribosome, L14 and L19 interact and together make contacts with the 16S rRNA in bridges B5 and B8.

In terms of biological role, binds to 23S rRNA. Forms part of two intersubunit bridges in the 70S ribosome. This chain is Large ribosomal subunit protein uL14, found in Malacoplasma penetrans (strain HF-2) (Mycoplasma penetrans).